Here is a 177-residue protein sequence, read N- to C-terminus: CRIB domain-containing protein RIC8 (177 aa).

The CRIB domain occupies I17–G30. The span at S72–S89 shows a compositional bias: basic and acidic residues. The tract at residues S72 to T177 is disordered. The segment covering G158–S171 has biased composition (low complexity).

In terms of biological role, functions as a downstream effector of Rho-related GTP binding proteins of the 'Rho of Plants' (ROPs) family. Participates in the propagation of ROP GTPase signals in specific cellular responses. The protein is CRIB domain-containing protein RIC8 (RIC8) of Arabidopsis thaliana (Mouse-ear cress).